Reading from the N-terminus, the 1106-residue chain is Inversin (1106 aa).

ANK repeat units lie at residues 13–42 (SLASEVHAAAVNGDKSTLLKLIAGNSELKD), 47–76 (FGRTPLMYCVLADRVDCAEALLKAGADVNR), 80–110 (SRRTALHLAAQKGNYRFMKLLLARRGNWMQK), 113–144 (EGMTPLHLTTRHKSPKCLALLLKHMAPGEVDT), 148–177 (NKQTALHWSAYYNNPEHVKLLIKHDSNIGI), 181–213 (EGKIPLHWAANNKDPSAIHTVKCILEAAPTESL), 220–250 (EGRTPLHFAVADGNVAVVDVLTSYEGCNVTS), 254–285 (LFRTPLHWAALLGHAQIVHLLLERNKFGTIPS), 288–317 (QGATPLHYAAQSNFAETVEVFLKHPSVKDD), 321–350 (EGRTSFMWAAGKGSDNVIRTMLDLKLDIDI), 356–385 (YAGTALHAAALSGHVSTVKLLLERNAQVDA), 389–418 (MKHTPLFRACEMGHKEVIQTLIKGGARVDL), 422–451 (DGHSPLHWAALGGNADVCQILIENKINPNV), 455–484 (AGRTPLQCAAYGGYINCMVVLLENNADPNI), 488–517 (EGRTALHWLCNNGYLDAIKLLLGFDAFPNH), and 523–553 (ERYTPLDYALLGEHHEVIQFMLEHGALSIAA). The D-box 1 signature appears at 490-498 (RTALHWLCN). Residues 555-584 (QDIAAFKIQAVYKGYKVRKAFQERKNLLMK) form the IQ 1 domain. Residues 589 to 607 (RKDAAAKKREEESKRKEAS) are compositionally biased toward basic and acidic residues. 4 disordered regions span residues 589-615 (RKDAAAKKREEESKRKEASLQKGMQNM), 636-688 (LQLS…ELQS), 746-782 (ANGTSAHGNRRHASACGTAGAGEKTRDQSLSSSGNRG), and 809-833 (AVPKSKRHQQKSRHKEVNYERCSPA). Composition is skewed to polar residues over residues 636–645 (LQLSNKQTDL) and 653–666 (VSASQIQLGRNSRG). The segment covering 812–822 (KSKRHQQKSRH) has biased composition (basic residues). A D-box 2 motif is present at residues 944-952 (RKELFRKKN). One can recognise an IQ 2 domain in the interval 951–980 (KNYAATVIQRTWRSYRLRQELSQLLSAKRQ).

As to quaternary structure, binds calmodulin via its IQ domains. Interacts with APC2.

The protein localises to the cytoplasm. Its subcellular location is the cytoskeleton. Required for normal renal development and establishment of left-right axis. Probably acts as a molecular switch between different Wnt signaling pathways. Inhibits the canonical Wnt pathway by targeting cytoplasmic disheveled for degradation by the ubiquitin-proteasome. This suggests that it is required in renal development to oppose the repression of terminal differentiation of tubular epithelial cells by Wnt signaling. The chain is Inversin (INVS) from Gallus gallus (Chicken).